Reading from the N-terminus, the 369-residue chain is Chorismate synthase (369 aa).

NADP(+) contacts are provided by R48 and R54. Residues 125–127, 238–239, G278, 293–297, and R319 each bind FMN; these read RSS, NA, and KPTSS.

The protein belongs to the chorismate synthase family. As to quaternary structure, homotetramer. The cofactor is FMNH2.

The catalysed reaction is 5-O-(1-carboxyvinyl)-3-phosphoshikimate = chorismate + phosphate. It functions in the pathway metabolic intermediate biosynthesis; chorismate biosynthesis; chorismate from D-erythrose 4-phosphate and phosphoenolpyruvate: step 7/7. Catalyzes the anti-1,4-elimination of the C-3 phosphate and the C-6 proR hydrogen from 5-enolpyruvylshikimate-3-phosphate (EPSP) to yield chorismate, which is the branch point compound that serves as the starting substrate for the three terminal pathways of aromatic amino acid biosynthesis. This reaction introduces a second double bond into the aromatic ring system. In Cupriavidus metallidurans (strain ATCC 43123 / DSM 2839 / NBRC 102507 / CH34) (Ralstonia metallidurans), this protein is Chorismate synthase.